Reading from the N-terminus, the 238-residue chain is Major prion protein (238 aa).

The signal sequence occupies residues 1–15 (MLVLFVATWSDLGLC). The interval 16–215 (KKRPKPGGWN…ESQAYYQRGS (200 aa)) is interaction with GRB2, ERI3 and SYN1. A disordered region spans residues 18-93 (RPKPGGWNTG…WHKPSKPKTS (76 aa)). 4 tandem repeats follow at residues 44–52 (PQGGGGWGQ), 53–60 (PHGGGWGQ), 61–68 (PHGGGWGQ), and 69–76 (PHGGGWGQ). The interval 44–76 (PQGGGGWGQPHGGGWGQPHGGGWGQPHGGGWGQ) is 4 X 8 AA tandem repeats of P-H-G-G-G-W-G-Q. The segment covering 45 to 80 (QGGGGWGQPHGGGWGQPHGGGWGQPHGGGWGQGGGT) has biased composition (gly residues). The Cu(2+) site is built by Gly47, Gly48, His54, Gly55, Gly56, His62, Gly63, Gly64, His70, Gly71, and Gly72. Basic residues predominate over residues 83–93 (QWHKPSKPKTS). Cys164 and Cys199 form a disulfide bridge. N-linked (GlcNAc...) asparagine glycans are attached at residues Asn166 and Asn182. Ser215 carries the GPI-anchor amidated serine lipid modification. The propeptide at 216–238 (SMVLFSSPPVILLISFLIFLIVG) is removed in mature form.

This sequence belongs to the prion family. Monomer and homodimer. Has a tendency to aggregate into amyloid fibrils containing a cross-beta spine, formed by a steric zipper of superposed beta-strands. Soluble oligomers may represent an intermediate stage on the path to fibril formation. Copper binding may promote oligomerization. Interacts with GRB2, APP, ERI3/PRNPIP and SYN1. Mislocalized cytosolically exposed PrP interacts with MGRN1; this interaction alters MGRN1 subcellular location and causes lysosomal enlargement. Interacts with KIAA1191.

The protein resides in the cell membrane. It is found in the golgi apparatus. Functionally, its primary physiological function is unclear. Has cytoprotective activity against internal or environmental stresses. May play a role in neuronal development and synaptic plasticity. May be required for neuronal myelin sheath maintenance. May play a role in iron uptake and iron homeostasis. Soluble oligomers are toxic to cultured neuroblastoma cells and induce apoptosis (in vitro). Association with GPC1 (via its heparan sulfate chains) targets PRNP to lipid rafts. Also provides Cu(2+) or Zn(2+) for the ascorbate-mediated GPC1 deaminase degradation of its heparan sulfate side chains. The chain is Major prion protein (PRNP) from Macaca sylvanus (Barbary macaque).